A 293-amino-acid chain; its full sequence is Elongation factor Ts (293 aa).

Residues 80–83 (TDFV) are involved in Mg(2+) ion dislocation from EF-Tu.

Belongs to the EF-Ts family.

Its subcellular location is the cytoplasm. In terms of biological role, associates with the EF-Tu.GDP complex and induces the exchange of GDP to GTP. It remains bound to the aminoacyl-tRNA.EF-Tu.GTP complex up to the GTP hydrolysis stage on the ribosome. The chain is Elongation factor Ts from Burkholderia thailandensis (strain ATCC 700388 / DSM 13276 / CCUG 48851 / CIP 106301 / E264).